A 364-amino-acid chain; its full sequence is UDP-N-acetylglucosamine--N-acetylmuramyl-(pentapeptide) pyrophosphoryl-undecaprenol N-acetylglucosamine transferase 1 (364 aa).

UDP-N-acetyl-alpha-D-glucosamine-binding positions include 10–12, Asn124, Ser195, Ile250, and Gln295; that span reads TGG.

Belongs to the glycosyltransferase 28 family. MurG subfamily.

It localises to the cell membrane. It carries out the reaction di-trans,octa-cis-undecaprenyl diphospho-N-acetyl-alpha-D-muramoyl-L-alanyl-D-glutamyl-meso-2,6-diaminopimeloyl-D-alanyl-D-alanine + UDP-N-acetyl-alpha-D-glucosamine = di-trans,octa-cis-undecaprenyl diphospho-[N-acetyl-alpha-D-glucosaminyl-(1-&gt;4)]-N-acetyl-alpha-D-muramoyl-L-alanyl-D-glutamyl-meso-2,6-diaminopimeloyl-D-alanyl-D-alanine + UDP + H(+). The protein operates within cell wall biogenesis; peptidoglycan biosynthesis. Cell wall formation. Catalyzes the transfer of a GlcNAc subunit on undecaprenyl-pyrophosphoryl-MurNAc-pentapeptide (lipid intermediate I) to form undecaprenyl-pyrophosphoryl-MurNAc-(pentapeptide)GlcNAc (lipid intermediate II). This Bacillus thuringiensis subsp. konkukian (strain 97-27) protein is UDP-N-acetylglucosamine--N-acetylmuramyl-(pentapeptide) pyrophosphoryl-undecaprenol N-acetylglucosamine transferase 1.